Consider the following 118-residue polypeptide: Large ribosomal subunit protein bL20 (118 aa).

It belongs to the bacterial ribosomal protein bL20 family.

In terms of biological role, binds directly to 23S ribosomal RNA and is necessary for the in vitro assembly process of the 50S ribosomal subunit. It is not involved in the protein synthesizing functions of that subunit. In Pseudomonas syringae pv. syringae (strain B728a), this protein is Large ribosomal subunit protein bL20.